A 182-amino-acid polypeptide reads, in one-letter code: Cytidylate kinase (182 aa).

Gly7 to Ser15 contributes to the ATP binding site.

Belongs to the cytidylate kinase family. Type 2 subfamily.

It is found in the cytoplasm. It catalyses the reaction CMP + ATP = CDP + ADP. The catalysed reaction is dCMP + ATP = dCDP + ADP. In Methanoregula boonei (strain DSM 21154 / JCM 14090 / 6A8), this protein is Cytidylate kinase.